We begin with the raw amino-acid sequence, 321 residues long: Ubiquinone biosynthesis O-methyltransferase, mitochondrial (321 aa).

S-adenosyl-L-methionine-binding residues include Arg102, Gly135, Asp157, and Leu210. Residues Glu211, Glu214, and His215 each contribute to the Mg(2+) site.

Belongs to the class I-like SAM-binding methyltransferase superfamily. UbiG/COQ3 family. In terms of assembly, component of a multi-subunit COQ enzyme complex. It depends on Mg(2+) as a cofactor.

It is found in the mitochondrion inner membrane. The catalysed reaction is a 3,4-dihydroxy-5-(all-trans-polyprenyl)benzoate + S-adenosyl-L-methionine = a 4-hydroxy-3-methoxy-5-(all-trans-polyprenyl)benzoate + S-adenosyl-L-homocysteine + H(+). It carries out the reaction a 3-demethylubiquinone + S-adenosyl-L-methionine = a ubiquinone + S-adenosyl-L-homocysteine. The enzyme catalyses a 3-demethylubiquinol + S-adenosyl-L-methionine = a ubiquinol + S-adenosyl-L-homocysteine + H(+). Its pathway is cofactor biosynthesis; ubiquinone biosynthesis. O-methyltransferase required for two non-consecutive steps during ubiquinone biosynthesis. Catalyzes the 2 O-methylation of 3,4-dihydroxy-5-(all-trans-polyprenyl)benzoic acid into 4-hydroxy-3-methoxy-5-(all-trans-polyprenyl)benzoic acid. Also catalyzes the last step of ubiquinone biosynthesis by mediating methylation of 3-demethylubiquinone into ubiquinone. Also able to mediate the methylation of 3-demethylubiquinol into ubiquinol. The protein is Ubiquinone biosynthesis O-methyltransferase, mitochondrial of Dictyostelium discoideum (Social amoeba).